A 428-amino-acid polypeptide reads, in one-letter code: 3-phosphoshikimate 1-carboxyvinyltransferase (428 aa).

3-phosphoshikimate is bound by residues Lys-22, Ser-23, and Arg-27. Residue Lys-22 participates in phosphoenolpyruvate binding. Positions 96 and 124 each coordinate phosphoenolpyruvate. Residues Ser-170, Ser-171, Gln-172, Ser-198, Asp-314, Asn-337, and Lys-341 each contribute to the 3-phosphoshikimate site. Gln-172 serves as a coordination point for phosphoenolpyruvate. Asp-314 acts as the Proton acceptor in catalysis. 3 residues coordinate phosphoenolpyruvate: Arg-345, Arg-387, and Lys-412.

This sequence belongs to the EPSP synthase family. As to quaternary structure, monomer.

The protein localises to the cytoplasm. It catalyses the reaction 3-phosphoshikimate + phosphoenolpyruvate = 5-O-(1-carboxyvinyl)-3-phosphoshikimate + phosphate. It functions in the pathway metabolic intermediate biosynthesis; chorismate biosynthesis; chorismate from D-erythrose 4-phosphate and phosphoenolpyruvate: step 6/7. Catalyzes the transfer of the enolpyruvyl moiety of phosphoenolpyruvate (PEP) to the 5-hydroxyl of shikimate-3-phosphate (S3P) to produce enolpyruvyl shikimate-3-phosphate and inorganic phosphate. In Vibrio vulnificus (strain YJ016), this protein is 3-phosphoshikimate 1-carboxyvinyltransferase.